A 962-amino-acid polypeptide reads, in one-letter code: pH-response regulator protein palF/prr-3 (962 aa).

Disordered stretches follow at residues methionine 1–threonine 43, alanine 225–serine 326, threonine 568–asparagine 675, and arginine 689–arginine 962. Basic residues predominate over residues isoleucine 237–proline 246. Composition is skewed to polar residues over residues glycine 297–histidine 307, serine 314–serine 326, and proline 581–valine 596. Composition is skewed to low complexity over residues proline 696–serine 722 and proline 738–alanine 747. The segment covering threonine 793–leucine 805 has biased composition (basic and acidic residues). Low complexity predominate over residues alanine 830 to proline 839. Positions serine 840–alanine 849 are enriched in pro residues. Over residues proline 913–serine 928 the composition is skewed to low complexity. Residues glycine 929–serine 949 are compositionally biased toward polar residues.

This sequence belongs to the arrestin family. PalF/RIM8 subfamily.

Functionally, required for the proteolytic cleavage of the transcription factor pacc-1 in response to alkaline ambient pH. The protein is pH-response regulator protein palF/prr-3 (prr-3) of Neurospora crassa (strain ATCC 24698 / 74-OR23-1A / CBS 708.71 / DSM 1257 / FGSC 987).